Here is a 247-residue protein sequence, read N- to C-terminus: Cell division protein ZapD (247 aa).

This sequence belongs to the ZapD family. As to quaternary structure, interacts with FtsZ.

Its subcellular location is the cytoplasm. In terms of biological role, cell division factor that enhances FtsZ-ring assembly. Directly interacts with FtsZ and promotes bundling of FtsZ protofilaments, with a reduction in FtsZ GTPase activity. This chain is Cell division protein ZapD, found in Escherichia coli O139:H28 (strain E24377A / ETEC).